Here is a 91-residue protein sequence, read N- to C-terminus: Small ribosomal subunit protein bS16c (91 aa).

It belongs to the bacterial ribosomal protein bS16 family.

Its subcellular location is the plastid. It localises to the chloroplast. This Vitis vinifera (Grape) protein is Small ribosomal subunit protein bS16c.